We begin with the raw amino-acid sequence, 906 residues long: Catenin alpha-1 (906 aa).

An N-acetylthreonine modification is found at T2. Residues 2-228 (TAVHTGNINF…PILYTASQAC (227 aa)) form an involved in homodimerization region. A Glycyl lysine isopeptide (Lys-Gly) (interchain with G-Cter in SUMO2) cross-link involves residue K57. The segment at 97–148 (VRKQCDLMKSAAGEFADDPCSSVKRGNMVRAARALLSAVTRLLILADMADVY) is interaction with JUP and CTNNB1. Phosphoserine is present on residues S264, S268, S295, and S297. Residues 325–394 (TRDDRRERIV…AVMDHVSDSF (70 aa)) form an interaction with alpha-actinin region. At T634 the chain carries Phosphothreonine. A Phosphoserine modification is found at S641. T645 bears the Phosphothreonine mark. A phosphoserine mark is found at S652 and S655. T658 is subject to Phosphothreonine. K797 is covalently cross-linked (Glycyl lysine isopeptide (Lys-Gly) (interchain with G-Cter in SUMO2)). S851 carries the post-translational modification Phosphoserine. A compositionally biased stretch (basic and acidic residues) spans 864–880 (PEKKPLVKREKQDETQT). The segment at 864-894 (PEKKPLVKREKQDETQTKIKRASQKKHVNPV) is disordered. Residues 881-891 (KIKRASQKKHV) show a composition bias toward basic residues.

It belongs to the vinculin/alpha-catenin family. As to quaternary structure, monomer and homodimer; the monomer preferentially binds to CTNNB1 and the homodimer to actin. Component of an cadherin:catenin adhesion complex composed of at least of CDH26, beta-catenin/CTNNB1, alpha-catenin/CTNNA1 and p120 catenin/CTNND1. Possible component of an E-cadherin/ catenin adhesion complex together with E-cadherin/CDH1 and beta-catenin/CTNNB1 or gamma-catenin/JUP; the complex is located to adherens junctions. The stable association of CTNNA1 is controversial as CTNNA1 was shown not to bind to F-actin when assembled in the complex. Alternatively, the CTNNA1-containing complex may be linked to F-actin by other proteins such as LIMA1. Binds AFDN and F-actin. Interacts with ARHGAP21. Interacts with AJUBA. Interacts with LIMA1. Interacts with vinculin/VCL. Interacts with TJP2/ZO2 (via N-terminus). Interacts with TJP1/ZO1 (via N-terminus). In terms of processing, sumoylated. Post-translationally, phosphorylation seems to contribute to the strength of cell-cell adhesion rather than to the basic capacity for cell-cell adhesion.

It is found in the cytoplasm. The protein resides in the cytoskeleton. Its subcellular location is the cell junction. The protein localises to the adherens junction. It localises to the cell membrane. It is found in the nucleus. In terms of biological role, associates with the cytoplasmic domain of a variety of cadherins. The association of catenins to cadherins produces a complex which is linked to the actin filament network, and which seems to be of primary importance for cadherins cell-adhesion properties. Can associate with both E- and N-cadherins. Originally believed to be a stable component of E-cadherin/catenin adhesion complexes and to mediate the linkage of cadherins to the actin cytoskeleton at adherens junctions. In contrast, cortical actin was found to be much more dynamic than E-cadherin/catenin complexes and CTNNA1 was shown not to bind to F-actin when assembled in the complex suggesting a different linkage between actin and adherens junctions components. The homodimeric form may regulate actin filament assembly and inhibit actin branching by competing with the Arp2/3 complex for binding to actin filaments. Involved in the regulation of WWTR1/TAZ, YAP1 and TGFB1-dependent SMAD2 and SMAD3 nuclear accumulation. May play a crucial role in cell differentiation. The polypeptide is Catenin alpha-1 (Bos taurus (Bovine)).